The following is a 776-amino-acid chain: GATOR2 complex protein Wdr24 (776 aa).

WD repeat units lie at residues 63–103 (NLSY…RQKQ), 109–149 (EHER…SINT), 152–192 (CNSE…KCMV), 196–235 (AHYG…GLEH), 238–280 (HTIA…IPFA), and 284–326 (EHTN…ALKA). The tract at residues 466 to 490 (HRSSFSNQKNPMNSRRATQVASDWP) is disordered. Residues 469 to 490 (SFSNQKNPMNSRRATQVASDWP) are compositionally biased toward polar residues. Residues 703–726 (NCGECGRPMGGKVGWYCDKCKSMQ) form a C4-type zinc finger. 15 residues coordinate Zn(2+): C704, C707, C719, C722, C730, C733, C744, C747, H749, H752, H755, C766, C769, H771, and C773. Residues 728–776 (AKCCVCGLIVRGVYAWCQGCSHGGHIEHLQKYFAKHSKCPKCGHLCAYS) form an RING-type; atypical zinc finger.

This sequence belongs to the WD repeat WDR24 family. As to quaternary structure, component of the GATOR complex consisting of mio, Nup44A/Seh1, Im11, Nplr3, Nplr2, Wdr24, Wdr59 and Sec13. Within the GATOR complex, probable component of the GATOR2 subcomplex which is likely composed of mio, Nup44A/Seh1, Wdr24, Wdr59 and Sec13. Interacts with Nup44A/Seh1. Interacts with mio. Interacts with Nplr3. The GATOR2 complex associates with unmet in the absence of S-adenosyl-L-methionine; the mio-Wdr24-Nup44A subcomplex is essential and sufficient for this interaction while Wdr59 and Sec13 are dispensable. This association acts as a nutrient sensor to inhibit mTORC1 signaling in the absence of methionine.

Its subcellular location is the lysosome. The protein localises to the cytoplasmic vesicle. It is found in the autophagosome. It catalyses the reaction S-ubiquitinyl-[E2 ubiquitin-conjugating enzyme]-L-cysteine + [acceptor protein]-L-lysine = [E2 ubiquitin-conjugating enzyme]-L-cysteine + N(6)-ubiquitinyl-[acceptor protein]-L-lysine.. It functions in the pathway protein modification; protein ubiquitination. Its function is as follows. An essential component of the GATOR subcomplex GATOR2 which functions as an activator of the amino acid-sensing branch of the mTORC1 signaling pathway. The two GATOR subcomplexes, GATOR1 and GATOR2, regulate the mTORC1 pathway in order to mediate metabolic homeostasis, female gametogenesis and the response to amino acid limitation and complete starvation. GATOR2 activates the mTORC1 signaling pathway through the inhibition of the GATOR1 subcomplex, controlling the switch to cell proliferation and growth under nutrient replete conditions and during female oocyte development. GATOR2 probably acts as an E3 ubiquitin-protein ligase toward GATOR1. In the presence of abundant amino acids, the GATOR2 complex mediates ubiquitination of components of the GATOR1 complex, leading to GATOR1 inactivation. This GATOR2 component is required for activating mTORC1 and promoting cell growth in both germline and somatic cells. In addition to its role in regulation of the mTORC1 complex, functions independently of mTORC1 to promote the acidification of lysosomes and facilitates autophagic flux. This Drosophila melanogaster (Fruit fly) protein is GATOR2 complex protein Wdr24.